The chain runs to 122 residues: MVQQESRLKVADNTGAKEVLTIRVLGGTKRRYASVGDKIVVSIKDATPNGNVKKGAVSTAVVVRTKKEVRRADGSYIRFDDNACVLLNAAGEMRGTRVFGPVARELREKQFMKIVSLAPEVL.

The protein belongs to the universal ribosomal protein uL14 family. Part of the 50S ribosomal subunit. Forms a cluster with proteins L3 and L19. In the 70S ribosome, L14 and L19 interact and together make contacts with the 16S rRNA in bridges B5 and B8.

Its function is as follows. Binds to 23S rRNA. Forms part of two intersubunit bridges in the 70S ribosome. This chain is Large ribosomal subunit protein uL14, found in Flavobacterium johnsoniae (strain ATCC 17061 / DSM 2064 / JCM 8514 / BCRC 14874 / CCUG 350202 / NBRC 14942 / NCIMB 11054 / UW101) (Cytophaga johnsonae).